The primary structure comprises 368 residues: uncharacterized protein (368 aa).

An N-terminal signal peptide occupies residues 1–19 (MHVSMIIFVSIFSIKYIMA). N-linked (GlcNAc...) asparagine; by host glycosylation is found at N99, N170, N266, and N295.

This is an uncharacterized protein from Ostreid herpesvirus 1 (isolate France) (OsHV-1).